Consider the following 304-residue polypeptide: Small ribosomal subunit biogenesis GTPase RsgA (304 aa).

Residues 70 to 229 (HNELNRPNIA…IADTPGFSKL (160 aa)) enclose the CP-type G domain. GTP-binding positions include 119 to 122 (TKID) and 172 to 180 (GQTGVGKST). The Zn(2+) site is built by Cys253, Cys259, His261, and Cys267.

Belongs to the TRAFAC class YlqF/YawG GTPase family. RsgA subfamily. As to quaternary structure, monomer. Associates with 30S ribosomal subunit, binds 16S rRNA. Zn(2+) is required as a cofactor.

The protein resides in the cytoplasm. Its function is as follows. One of several proteins that assist in the late maturation steps of the functional core of the 30S ribosomal subunit. Helps release RbfA from mature subunits. May play a role in the assembly of ribosomal proteins into the subunit. Circularly permuted GTPase that catalyzes slow GTP hydrolysis, GTPase activity is stimulated by the 30S ribosomal subunit. The protein is Small ribosomal subunit biogenesis GTPase RsgA of Phytoplasma mali (strain AT).